A 96-amino-acid chain; its full sequence is ESAT-6-like protein SAG0230 (96 aa).

It belongs to the WXG100 family. sagEsxA-like subfamily. In terms of assembly, homodimer.

The polypeptide is ESAT-6-like protein SAG0230 (Streptococcus agalactiae serotype V (strain ATCC BAA-611 / 2603 V/R)).